The sequence spans 340 residues: Ephrin-B3 (340 aa).

The N-terminal stretch at methionine 1 to glycine 27 is a signal peptide. Positions leucine 28–valine 167 constitute an Ephrin RBD domain. Residues leucine 28 to proline 226 lie on the Extracellular side of the membrane. 2 disulfides stabilise this stretch: cysteine 62-cysteine 104 and cysteine 92-cysteine 156. Positions glycine 168 to methionine 225 are disordered. Over residues proline 185 to lysine 200 the composition is skewed to basic and acidic residues. A glycan (N-linked (GlcNAc...) asparagine) is linked at asparagine 210. A helical transmembrane segment spans residues alanine 227–glycine 247. Residues alanine 248–valine 340 lie on the Cytoplasmic side of the membrane. The tract at residues arginine 254 to arginine 298 is disordered. Positions glycine 267–glycine 284 are enriched in gly residues. Omega-N-methylarginine is present on arginine 271. Serine 274 is modified (phosphoserine). The PDZ-binding signature appears at tyrosine 338 to valine 340.

It belongs to the ephrin family. Interacts with GRIP1 and GRIP2. In terms of assembly, (Microbial infection) Interacts with nipah virus and hendra virus glycoprotein. Highly expressed in brain; expressed in embryonic floor plate, roof plate and hindbrain segments.

The protein resides in the membrane. Cell surface transmembrane ligand for Eph receptors, a family of receptor tyrosine kinases which are crucial for migration, repulsion and adhesion during neuronal, vascular and epithelial development. Binds promiscuously Eph receptors residing on adjacent cells, leading to contact-dependent bidirectional signaling into neighboring cells. The signaling pathway downstream of the receptor is referred to as forward signaling while the signaling pathway downstream of the ephrin ligand is referred to as reverse signaling. May play a pivotal role in forebrain function. Binds to, and induce the collapse of, commissural axons/growth cones in vitro. May play a role in constraining the orientation of longitudinally projecting axons. In terms of biological role, (Microbial infection) Acts as a receptor for nipah virus and hendra virus. The protein is Ephrin-B3 (EFNB3) of Homo sapiens (Human).